A 441-amino-acid polypeptide reads, in one-letter code: Ribulose bisphosphate carboxylase large chain (441 aa).

Lysine 4 bears the N6,N6,N6-trimethyllysine mark. Substrate is bound by residues asparagine 113 and threonine 163. The active-site Proton acceptor is the lysine 165. A substrate-binding site is contributed by lysine 167. Residues lysine 191, aspartate 193, and glutamate 194 each contribute to the Mg(2+) site. An N6-carboxylysine modification is found at lysine 191. Histidine 284 serves as the catalytic Proton acceptor. The substrate site is built by arginine 285, histidine 317, and serine 369.

Belongs to the RuBisCO large chain family. Type I subfamily. Heterohexadecamer of 8 large chains and 8 small chains; disulfide-linked. The disulfide link is formed within the large subunit homodimers. Mg(2+) is required as a cofactor. In terms of processing, the disulfide bond which can form in the large chain dimeric partners within the hexadecamer appears to be associated with oxidative stress and protein turnover.

It is found in the plastid. Its subcellular location is the chloroplast. It catalyses the reaction 2 (2R)-3-phosphoglycerate + 2 H(+) = D-ribulose 1,5-bisphosphate + CO2 + H2O. The catalysed reaction is D-ribulose 1,5-bisphosphate + O2 = 2-phosphoglycolate + (2R)-3-phosphoglycerate + 2 H(+). In terms of biological role, ruBisCO catalyzes two reactions: the carboxylation of D-ribulose 1,5-bisphosphate, the primary event in carbon dioxide fixation, as well as the oxidative fragmentation of the pentose substrate in the photorespiration process. Both reactions occur simultaneously and in competition at the same active site. The polypeptide is Ribulose bisphosphate carboxylase large chain (Heliamphora nutans (Venezuelan marsh pitcher plant)).